The sequence spans 219 residues: Ribose-5-phosphate isomerase A (219 aa).

Substrate-binding positions include 28 to 31 (TGST), 81 to 84 (DGAD), and 94 to 97 (KGGG). Residue E103 is the Proton acceptor of the active site. A substrate-binding site is contributed by K121.

This sequence belongs to the ribose 5-phosphate isomerase family. In terms of assembly, homodimer.

The catalysed reaction is aldehydo-D-ribose 5-phosphate = D-ribulose 5-phosphate. Its pathway is carbohydrate degradation; pentose phosphate pathway; D-ribose 5-phosphate from D-ribulose 5-phosphate (non-oxidative stage): step 1/1. Its function is as follows. Catalyzes the reversible conversion of ribose-5-phosphate to ribulose 5-phosphate. The chain is Ribose-5-phosphate isomerase A from Photorhabdus laumondii subsp. laumondii (strain DSM 15139 / CIP 105565 / TT01) (Photorhabdus luminescens subsp. laumondii).